A 220-amino-acid polypeptide reads, in one-letter code: Uracil-DNA glycosylase (220 aa).

Asp-60 functions as the Proton acceptor in the catalytic mechanism.

It belongs to the uracil-DNA glycosylase (UDG) superfamily. UNG family.

It localises to the cytoplasm. The enzyme catalyses Hydrolyzes single-stranded DNA or mismatched double-stranded DNA and polynucleotides, releasing free uracil.. Its function is as follows. Excises uracil residues from the DNA which can arise as a result of misincorporation of dUMP residues by DNA polymerase or due to deamination of cytosine. The protein is Uracil-DNA glycosylase of Francisella tularensis subsp. tularensis (strain FSC 198).